Reading from the N-terminus, the 140-residue chain is Organic hydroperoxide resistance protein-like (140 aa).

Belongs to the OsmC/Ohr family.

This Staphylococcus aureus (strain MSSA476) protein is Organic hydroperoxide resistance protein-like.